Consider the following 378-residue polypeptide: Ribosomal RNA large subunit methyltransferase G (378 aa).

Belongs to the methyltransferase superfamily. RlmG family.

It is found in the cytoplasm. The catalysed reaction is guanosine(1835) in 23S rRNA + S-adenosyl-L-methionine = N(2)-methylguanosine(1835) in 23S rRNA + S-adenosyl-L-homocysteine + H(+). In terms of biological role, specifically methylates the guanine in position 1835 (m2G1835) of 23S rRNA. The protein is Ribosomal RNA large subunit methyltransferase G of Shigella boydii serotype 4 (strain Sb227).